Reading from the N-terminus, the 171-residue chain is Peptide deformylase (171 aa).

Fe cation-binding residues include Cys91 and His133. Residue Glu134 is part of the active site. His137 contributes to the Fe cation binding site.

This sequence belongs to the polypeptide deformylase family. Fe(2+) serves as cofactor.

It catalyses the reaction N-terminal N-formyl-L-methionyl-[peptide] + H2O = N-terminal L-methionyl-[peptide] + formate. Functionally, removes the formyl group from the N-terminal Met of newly synthesized proteins. Requires at least a dipeptide for an efficient rate of reaction. N-terminal L-methionine is a prerequisite for activity but the enzyme has broad specificity at other positions. This is Peptide deformylase from Sodalis glossinidius (strain morsitans).